The sequence spans 103 residues: uncharacterized protein (103 aa).

2 helical membrane passes run 42–62 and 65–85; these read PFPLLRLLSVTLFISSLVLLA and TGTLNIFSYSYVVMVVLFICA.

Its subcellular location is the membrane. This is an uncharacterized protein from Saccharomyces cerevisiae (strain ATCC 204508 / S288c) (Baker's yeast).